Consider the following 101-residue polypeptide: Protein Tat (101 aa).

The tract at residues 1–24 (MEPIDPNLEPWNHPGSQPKTACNN) is interaction with human CREBBP. Residues 1–48 (MEPIDPNLEPWNHPGSQPKTACNNCYCKQCCYHCQLCFTKKGLGISYG) form a transactivation region. Residues Cys22, Cys25, and Cys27 each contribute to the Zn(2+) site. The interval 22 to 37 (CNNCYCKQCCYHCQLC) is cysteine-rich. Lys28 carries the N6-acetyllysine; by host PCAF modification. Zn(2+)-binding residues include Cys30, His33, Cys34, and Cys37. The tract at residues 38–48 (FTKKGLGISYG) is core. Residues 48 to 101 (GRRKRKQRRRTSESSQNHQDPVPKQPLSQPGGIETGQKKSKKEVESQTTSDQFA) form a disordered region. The Nuclear localization signal, RNA-binding (TAR), and protein transduction motif lies at 49–57 (RRKRKQRRR). The segment at 49 to 86 (RRKRKQRRRTSESSQNHQDPVPKQPLSQPGGIETGQKK) is interaction with the host capping enzyme RNGTT. An N6-acetyllysine; by host EP300 and GCN5L2 modification is found at Lys51. Residue Arg52 is modified to Asymmetric dimethylarginine; by host PRMT6. Lys71 is covalently cross-linked (Glycyl lysine isopeptide (Lys-Gly) (interchain with G-Cter in ubiquitin)).

It belongs to the lentiviruses Tat family. As to quaternary structure, interacts with host CCNT1. Associates with the P-TEFb complex composed at least of Tat, P-TEFb (CDK9 and CCNT1), TAR RNA, RNA Pol II. Recruits the HATs CREBBP, TAF1/TFIID, EP300, PCAF and GCN5L2. Interacts with host KAT5/Tip60; this interaction targets the latter to degradation. Interacts with the host deacetylase SIRT1. Interacts with host capping enzyme RNGTT; this interaction stimulates RNGTT. Binds to host KDR, and to the host integrins ITGAV/ITGB3 and ITGA5/ITGB1. Interacts with host KPNB1/importin beta-1 without previous binding to KPNA1/importin alpha-1. Interacts with EIF2AK2. Interacts with host nucleosome assembly protein NAP1L1; this interaction may be required for the transport of Tat within the nucleus, since the two proteins interact at the nuclear rim. Interacts with host C1QBP/SF2P32; this interaction involves lysine-acetylated Tat. Interacts with the host chemokine receptors CCR2, CCR3 and CXCR4. Interacts with host DPP4/CD26; this interaction may trigger an anti-proliferative effect. Interacts with host LDLR. Interacts with the host extracellular matrix metalloproteinase MMP1. Interacts with host PRMT6; this interaction mediates Tat's methylation. Interacts with, and is ubiquitinated by MDM2/Hdm2. Interacts with host PSMC3 and HTATIP2. Interacts with STAB1; this interaction may overcome SATB1-mediated repression of IL2 and IL2RA (interleukin) in T cells by binding to the same domain than HDAC1. Interacts (when acetylated) with human CDK13, thereby increasing HIV-1 mRNA splicing and promoting the production of the doubly spliced HIV-1 protein Nef. Interacts with host TBP; this interaction modulates the activity of transcriptional pre-initiation complex. Interacts with host RELA. In terms of processing, asymmetrical arginine methylation by host PRMT6 seems to diminish the transactivation capacity of Tat and affects the interaction with host CCNT1. Post-translationally, polyubiquitination by host MDM2 does not target Tat to degradation, but activates its transactivation function and fosters interaction with CCNT1 and TAR RNA. Phosphorylated by EIF2AK2 on serine and threonine residues adjacent to the basic region important for TAR RNA binding and function. Phosphorylation of Tat by EIF2AK2 is dependent on the prior activation of EIF2AK2 by dsRNA.

The protein localises to the host nucleus. Its subcellular location is the host nucleolus. It is found in the host cytoplasm. It localises to the secreted. Its function is as follows. Transcriptional activator that increases RNA Pol II processivity, thereby increasing the level of full-length viral transcripts. Recognizes a hairpin structure at the 5'-LTR of the nascent viral mRNAs referred to as the transactivation responsive RNA element (TAR) and recruits the cyclin T1-CDK9 complex (P-TEFb complex) that will in turn hyperphosphorylate the RNA polymerase II to allow efficient elongation. The CDK9 component of P-TEFb and other Tat-activated kinases hyperphosphorylate the C-terminus of RNA Pol II that becomes stabilized and much more processive. Other factors such as HTATSF1/Tat-SF1, SUPT5H/SPT5, and HTATIP2 are also important for Tat's function. Besides its effect on RNA Pol II processivity, Tat induces chromatin remodeling of proviral genes by recruiting the histone acetyltransferases (HATs) CREBBP, EP300 and PCAF to the chromatin. This also contributes to the increase in proviral transcription rate, especially when the provirus integrates in transcriptionally silent region of the host genome. To ensure maximal activation of the LTR, Tat mediates nuclear translocation of NF-kappa-B by interacting with host RELA. Through its interaction with host TBP, Tat may also modulate transcription initiation. Tat can reactivate a latently infected cell by penetrating in it and transactivating its LTR promoter. In the cytoplasm, Tat is thought to act as a translational activator of HIV-1 mRNAs. Functionally, extracellular circulating Tat can be endocytosed by surrounding uninfected cells via the binding to several surface receptors such as CD26, CXCR4, heparan sulfate proteoglycans (HSPG) or LDLR. Neurons are rarely infected, but they internalize Tat via their LDLR. Through its interaction with nuclear HATs, Tat is potentially able to control the acetylation-dependent cellular gene expression. Modulates the expression of many cellular genes involved in cell survival, proliferation or in coding for cytokines or cytokine receptors. Tat plays a role in T-cell and neurons apoptosis. Tat induced neurotoxicity and apoptosis probably contribute to neuroAIDS. Circulating Tat also acts as a chemokine-like and/or growth factor-like molecule that binds to specific receptors on the surface of the cells, affecting many cellular pathways. In the vascular system, Tat binds to ITGAV/ITGB3 and ITGA5/ITGB1 integrins dimers at the surface of endothelial cells and competes with bFGF for heparin-binding sites, leading to an excess of soluble bFGF. The polypeptide is Protein Tat (Pan troglodytes (Chimpanzee)).